Consider the following 188-residue polypeptide: Ion-translocating oxidoreductase complex subunit B (188 aa).

The interval 1-23 (MIEAAVSMSALGLGLGLLLGVAA) is hydrophobic. The 4Fe-4S domain occupies 29–88 (ESPPIVDAIEGILPGTNCGACGYPGCRGLAEAMSEGAAPVTACAPGGRDVALALAAIVET). Residues Cys-46, Cys-49, Cys-54, Cys-71, Cys-113, Cys-116, Cys-119, Cys-123, Cys-143, Cys-146, Cys-149, and Cys-153 each contribute to the [4Fe-4S] cluster site. 2 4Fe-4S ferredoxin-type domains span residues 104–133 (TVAFIFEDHCTGCMRCFKRCPTDAIIGANR) and 134–163 (QIHTVVTDACIGCNACIEACPTEAIVARVK).

It belongs to the 4Fe4S bacterial-type ferredoxin family. RnfB subfamily. The complex is composed of six subunits: RnfA, RnfB, RnfC, RnfD, RnfE and RnfG. It depends on [4Fe-4S] cluster as a cofactor.

It is found in the cellular chromatophore membrane. Its function is as follows. Part of a membrane-bound complex that couples electron transfer with translocation of ions across the membrane. This chain is Ion-translocating oxidoreductase complex subunit B, found in Cereibacter sphaeroides (strain ATCC 17023 / DSM 158 / JCM 6121 / CCUG 31486 / LMG 2827 / NBRC 12203 / NCIMB 8253 / ATH 2.4.1.) (Rhodobacter sphaeroides).